The chain runs to 331 residues: D-alanine--D-alanine ligase (331 aa).

Residues 116-316 (KRLWQTHSLP…YEDFVLQLAA (201 aa)) enclose the ATP-grasp domain. 142–197 (ADRLGLPLIVKPAREGSSIGLTKVTSVAELPAAYEKAARLDRDVMAEQFIDGDELT) contributes to the ATP binding site. Mg(2+) contacts are provided by Asp-269, Glu-283, and Asn-285.

This sequence belongs to the D-alanine--D-alanine ligase family. Mg(2+) is required as a cofactor. Mn(2+) serves as cofactor.

Its subcellular location is the cytoplasm. It carries out the reaction 2 D-alanine + ATP = D-alanyl-D-alanine + ADP + phosphate + H(+). It participates in cell wall biogenesis; peptidoglycan biosynthesis. Functionally, cell wall formation. The polypeptide is D-alanine--D-alanine ligase (Ralstonia nicotianae (strain ATCC BAA-1114 / GMI1000) (Ralstonia solanacearum)).